The chain runs to 185 residues: Translocon-associated protein subunit gamma (185 aa).

Methionine 1 carries the post-translational modification N-acetylmethionine. The Lumenal segment spans residues 1–27; it reads MAPKGGPKQQSEEDLLLQDFSRNLSAK. Serine 11 carries the phosphoserine modification. The chain crosses the membrane as a helical span at residues 28–48; that stretch reads SSALFFGNAFIVSAIPIWLYW. Topologically, residues 49-54 are cytoplasmic; sequence RIWHMD. The chain crosses the membrane as a helical span at residues 55 to 76; the sequence is LIQSAVLYSVMTLVSTYLVAFA. Residues 77 to 135 lie on the Lumenal side of the membrane; it reads YKNVKFVLKHKVAQKREDAVSKEVTRKLSEADNRKMSRKEKDERILWKKNEVADYEATT. Serine 105 carries the post-translational modification Phosphoserine. A helical transmembrane segment spans residues 136 to 157; the sequence is FSIFYNNTLFLVLVIVASFFIL. Topologically, residues 158–163 are cytoplasmic; that stretch reads KNFNPT. A helical transmembrane segment spans residues 164–184; that stretch reads VNYILSISASSGLIALLSTGS.

This sequence belongs to the TRAP-gamma family. Heterotetramer of TRAP-alpha, TRAP-beta, TRAP-delta and TRAP-gamma.

The protein localises to the endoplasmic reticulum membrane. Functionally, TRAP proteins are part of a complex whose function is to bind calcium to the ER membrane and thereby regulate the retention of ER resident proteins. The protein is Translocon-associated protein subunit gamma (SSR3) of Bos taurus (Bovine).